Here is a 332-residue protein sequence, read N- to C-terminus: Acetyl-coenzyme A carboxylase carboxyl transferase subunit beta (332 aa).

A CoA carboxyltransferase N-terminal domain is found at 24-293 (LWIKCPDSGH…PEVIVESEPE (270 aa)). Residues 288 to 332 (VESEPEPEPEPVVAEIIPPTSDLPVSAPAPAPVAAQTPAPAAPSA) are disordered. Low complexity predominate over residues 298–332 (PVVAEIIPPTSDLPVSAPAPAPVAAQTPAPAAPSA).

The protein belongs to the AccD/PCCB family. As to quaternary structure, acetyl-CoA carboxylase is a heterohexamer composed of biotin carboxyl carrier protein (AccB), biotin carboxylase (AccC) and two subunits each of ACCase subunit alpha (AccA) and ACCase subunit beta (AccD).

The protein resides in the cytoplasm. The catalysed reaction is N(6)-carboxybiotinyl-L-lysyl-[protein] + acetyl-CoA = N(6)-biotinyl-L-lysyl-[protein] + malonyl-CoA. Its pathway is lipid metabolism; malonyl-CoA biosynthesis; malonyl-CoA from acetyl-CoA: step 1/1. Component of the acetyl coenzyme A carboxylase (ACC) complex. Biotin carboxylase (BC) catalyzes the carboxylation of biotin on its carrier protein (BCCP) and then the CO(2) group is transferred by the transcarboxylase to acetyl-CoA to form malonyl-CoA. The sequence is that of Acetyl-coenzyme A carboxylase carboxyl transferase subunit beta from Rhodopseudomonas palustris (strain BisB18).